A 115-amino-acid chain; its full sequence is Protein translation factor SUI1 homolog (115 aa).

Belongs to the SUI1 family.

Functionally, probably involved in translation. The protein is Protein translation factor SUI1 homolog (TIF) of Zea mays (Maize).